Reading from the N-terminus, the 483-residue chain is GTPase Der (483 aa).

EngA-type G domains follow at residues 3–167 (FTLA…GEER) and 212–387 (LRIA…EIWN). GTP is bound by residues 9 to 16 (GRPNVGKS), 56 to 60 (DTAGL), 119 to 122 (NKAE), 218 to 225 (GRPNAGKS), 265 to 269 (DTAGM), and 330 to 333 (NKWD). Residues 388 to 472 (RRISTGRLNR…PIRLSLRTSD (85 aa)) form the KH-like domain.

Belongs to the TRAFAC class TrmE-Era-EngA-EngB-Septin-like GTPase superfamily. EngA (Der) GTPase family. In terms of assembly, associates with the 50S ribosomal subunit.

Its function is as follows. GTPase that plays an essential role in the late steps of ribosome biogenesis. This is GTPase Der from Brucella abortus (strain 2308).